A 339-amino-acid polypeptide reads, in one-letter code: Transcription factor IIIA (339 aa).

9 consecutive C2H2-type zinc fingers follow at residues 12-36, 42-66, 72-97, 104-128, 134-158, 161-187, 190-212, 219-244, and 250-274; these read FICS…LCKH, FPCT…VLSH, CKCE…KRAH, YVCY…QYIH, FKCS…EKTH, YPCR…AELH, VTCS…KKIH, YRCP…LTFH, and FVCE…FNTH. The disordered stretch occupies residues 271-339; it reads FNTHDPEKKK…LPVLENLTLK (69 aa). Residues 299–309 are compositionally biased toward basic residues; the sequence is KPKKSKKKKKP. Over residues 311-323 the composition is skewed to polar residues; sequence QTPAMESQEQQPD.

The protein localises to the nucleus. Involved in ribosomal large subunit biogenesis. Interacts with the internal control region (ICR) of approximately 50 bases within the 5S RNA genes, is required for correct transcription of these genes by RNA polymerase III. Also binds the transcribed 5S RNA's. In Anaxyrus americanus (American toad), this protein is Transcription factor IIIA (gtf3a).